A 219-amino-acid polypeptide reads, in one-letter code: uncharacterized protein (219 aa).

It to T.pallidum TP_0126.

This is an uncharacterized protein from Treponema pallidum (strain Nichols).